The primary structure comprises 73 residues: Conotoxin reg3a (73 aa).

Positions 1-20 (MMSKLRVLLTICLLLFPLSA) are cleaved as a signal peptide. Residues 21-55 (LPLDGDQPADQPAKRMWNGKLAARKPRFDKYDLVR) constitute a propeptide that is removed on maturation. 4-hydroxyproline is present on residues proline 59, proline 60, proline 65, and proline 70. The residue at position 72 (cysteine 72) is a Cysteine amide.

Contains 3 disulfide bonds. As to expression, expressed by the venom duct.

It localises to the secreted. In Conus regius (Crown cone), this protein is Conotoxin reg3a.